The following is a 313-amino-acid chain: Beta-lactamase FAR-1 (313 aa).

The signal sequence occupies residues 1–28; that stretch reads MPGVDISFLKKSGRRTMAAAAVIALLGG. The N-palmitoyl cysteine moiety is linked to residue Cys29. Cys29 carries the S-diacylglycerol cysteine lipid modification. The active-site Acyl-ester intermediate is the Ser94. Substrate is bound at residue Ser154. Glu190 (proton acceptor) is an active-site residue. A substrate-binding site is contributed by 258–260; the sequence is KTG.

The protein belongs to the class-A beta-lactamase family.

The protein resides in the cell membrane. It carries out the reaction a beta-lactam + H2O = a substituted beta-amino acid. Its activity is regulated as follows. Inhibited by clavulanic acid, and at a low level by tazobactam and sulbactam. Functionally, confers high levels of resistance to amoxicillin, benzylpenicillin, piperacillin, ticarcillin and cephalothin. Also hydrolyzes aztreonam at a low level. Not active against ceftazidime, cefotaxime and imipenem. This is Beta-lactamase FAR-1 (bla) from Nocardia farcinica (strain IFM 10152).